A 59-amino-acid polypeptide reads, in one-letter code: MANPRHRHTPSRRDKRRANWKATAPNLALCPECKEPKLPHRVCPNCGTYKGRKILEVEE.

This sequence belongs to the bacterial ribosomal protein bL32 family.

This is Large ribosomal subunit protein bL32 from Thermodesulfovibrio yellowstonii (strain ATCC 51303 / DSM 11347 / YP87).